A 129-amino-acid polypeptide reads, in one-letter code: MAKTPVRTRKRVKKQVADGMAHIHASFNNTIVTLTDRQGNALSWATAGGSGFRGSRKSTPFAAQVAADRAGAVAKEFGLKNIEVFVKGPGPGRESAIRALNAAGFKITNITDVTPIPHNGCRPPKKRRV.

This sequence belongs to the universal ribosomal protein uS11 family. In terms of assembly, part of the 30S ribosomal subunit. Interacts with proteins S7 and S18. Binds to IF-3.

Functionally, located on the platform of the 30S subunit, it bridges several disparate RNA helices of the 16S rRNA. Forms part of the Shine-Dalgarno cleft in the 70S ribosome. The sequence is that of Small ribosomal subunit protein uS11 from Colwellia psychrerythraea (strain 34H / ATCC BAA-681) (Vibrio psychroerythus).